The chain runs to 365 residues: MKKRIALLPGDGIGPEVLESATDVLKSVAERFNHEFEFEYGLIGGAAIDEHHNPLPEETVAACKNADAILLGAVGGPKWDQNPSELRPEKGLLSIRKQLDLFANLRPVKVFESLSDASPLKKEYIDNVDFVIVRELTGGLYFGQPSKRYVNTEGEQEAVDTLFYKRTEIERVIREGFKMAAARKGKVTSVDKANVLESSRLWREVAEDVAQEFPDVKLEHMLVDNAAMQLIYAPNQFDVVVTENMFGDILSDEASMLTGSLGMLPSASLSSSGLHLFEPVHGSAPDIAGKGMANPFAAILSAAMLLRTSFGLEEEAKAVEDAVNKVLASGKRTRDLARSEEFSSTQAITEEVKAAIMSENTISNV.

Position 76–89 (76–89 (GPKWDQNPSELRPE)) interacts with NAD(+). Positions 96, 106, 134, and 224 each coordinate substrate. Asp224, Asp248, and Asp252 together coordinate Mg(2+). 282–294 (GSAPDIAGKGMAN) is a binding site for NAD(+).

It belongs to the isocitrate and isopropylmalate dehydrogenases family. LeuB type 1 subfamily. Homodimer. The cofactor is Mg(2+). Requires Mn(2+) as cofactor.

The protein resides in the cytoplasm. It catalyses the reaction (2R,3S)-3-isopropylmalate + NAD(+) = 4-methyl-2-oxopentanoate + CO2 + NADH. Its pathway is amino-acid biosynthesis; L-leucine biosynthesis; L-leucine from 3-methyl-2-oxobutanoate: step 3/4. Functionally, catalyzes the oxidation of 3-carboxy-2-hydroxy-4-methylpentanoate (3-isopropylmalate) to 3-carboxy-4-methyl-2-oxopentanoate. The product decarboxylates to 4-methyl-2 oxopentanoate. This Bacillus subtilis (strain 168) protein is 3-isopropylmalate dehydrogenase (leuB).